Consider the following 1262-residue polypeptide: Isoleucine--tRNA ligase, cytoplasmic (1262 aa).

Met1 carries the N-acetylmethionine modification. Residues 48–58 carry the 'HIGH' region motif; it reads PFATGLPHYGH. The 'KMSKS' region motif lies at 600 to 604; sequence KMSKR. Lys603 lines the ATP pocket. Ser1049 carries the post-translational modification Phosphoserine. Thr1058 carries the phosphothreonine modification.

This sequence belongs to the class-I aminoacyl-tRNA synthetase family. In terms of assembly, part of a multisubunit complex that groups tRNA ligases for Arg (RARS1), Asp (DARS1), Gln (QARS1), Ile (IARS1), Leu (LARS1), Lys (KARS1), Met (MARS1) the bifunctional ligase for Glu and Pro (EPRS1) and the auxiliary subunits AIMP1/p43, AIMP2/p38 and EEF1E1/p18.

The protein localises to the cytoplasm. It localises to the cytosol. The enzyme catalyses tRNA(Ile) + L-isoleucine + ATP = L-isoleucyl-tRNA(Ile) + AMP + diphosphate. In terms of biological role, catalyzes the specific attachment of an amino acid to its cognate tRNA in a 2 step reaction: the amino acid (AA) is first activated by ATP to form AA-AMP and then transferred to the acceptor end of the tRNA. In Mus musculus (Mouse), this protein is Isoleucine--tRNA ligase, cytoplasmic (Iars1).